Consider the following 745-residue polypeptide: Meiotic driver SPOK3 (745 aa).

Residues 4-34 (KDRITQLLRELEEAKAREAQERCEKERLQLE) are a coiled coil. Disordered regions lie at residues 173–222 (ELTQ…DGVG) and 407–487 (LSSA…VDPQ). Over residues 188 to 197 (TSDRSLERRQ) the composition is skewed to basic and acidic residues. Composition is skewed to polar residues over residues 208–217 (KSKYICSNRQ) and 409–422 (SAPS…SEYT). Residues 214 to 325 (SNRQPDGVGI…LLLYVDRDDW (112 aa)) form a required for antidote activity region. Positions 466–482 (AKRERGPSSGGKDDGRS) are enriched in basic and acidic residues. A required for poison activity region spans residues 491–745 (QYCTQACLLG…SPMATPSHGG (255 aa)).

Its subcellular location is the cytoplasm. The protein localises to the nucleus. Its function is as follows. Promotes unequal transmission of alleles from the parental zygote to progeny spores by acting as poison/antidote system, leading to poisoning of progeny that do not inherit the allele. May possess DNA nuclease activity that leads to spore killing, and a kinase activity that confers resistance to the nuclease activity. The chain is Meiotic driver SPOK3 from Podospora anserina (Pleurage anserina).